The primary structure comprises 455 residues: Enolase (455 aa).

A (2R)-2-phosphoglycerate-binding site is contributed by Gln166. The Proton donor role is filled by Glu208. Residues Asp249, Glu311, and Asp338 each coordinate Mg(2+). Residues Lys363, Arg392, Ser393, and Lys414 each coordinate (2R)-2-phosphoglycerate. Lys363 acts as the Proton acceptor in catalysis.

Belongs to the enolase family. Mg(2+) is required as a cofactor.

The protein localises to the cytoplasm. Its subcellular location is the secreted. It is found in the cell surface. The catalysed reaction is (2R)-2-phosphoglycerate = phosphoenolpyruvate + H2O. The protein operates within carbohydrate degradation; glycolysis; pyruvate from D-glyceraldehyde 3-phosphate: step 4/5. Its function is as follows. Catalyzes the reversible conversion of 2-phosphoglycerate (2-PG) into phosphoenolpyruvate (PEP). It is essential for the degradation of carbohydrates via glycolysis. This chain is Enolase, found in Mycoplasma mobile (strain ATCC 43663 / 163K / NCTC 11711) (Mesomycoplasma mobile).